An 811-amino-acid chain; its full sequence is Probable inorganic carbon transporter subunit DabA (811 aa).

Positions 336, 338, 498, and 513 each coordinate Zn(2+).

It belongs to the inorganic carbon transporter (TC 9.A.2) DabA family. In terms of assembly, forms a complex with DabB. It depends on Zn(2+) as a cofactor.

Its subcellular location is the cell inner membrane. Part of an energy-coupled inorganic carbon pump. The sequence is that of Probable inorganic carbon transporter subunit DabA from Azorhizobium caulinodans (strain ATCC 43989 / DSM 5975 / JCM 20966 / LMG 6465 / NBRC 14845 / NCIMB 13405 / ORS 571).